The following is a 607-amino-acid chain: Protein P1 (607 aa).

The signal sequence occupies residues 1-22 (MYSKLMFFFALCSISFLFTSEA). Transmembrane regions (helical) follow at residues 115–135 (FLAVEKFLWGLTRLWSSLILA), 137–157 (FSALWWLVSNFTTPVFCLALL), and 167–187 (TVSFLFGGLPIWIISIAFSLL). One can recognise a Peptidase S39 domain in the interval 206 to 400 (IDGFKSFTIP…GLTSPTYVFE (195 aa)). Residues His254, Asp289, and Ser357 each act as for protease activity in the active site. Disordered stretches follow at residues 457–485 (EDLSGNGVRGTVRGTNGEGSSTPKTSNVD) and 517–607 (KAMK…PKQN). The span at 474 to 484 (EGSSTPKTSNV) shows a compositional bias: polar residues. The span at 520–531 (KTPKSRRRRAPK) shows a compositional bias: basic residues. The segment covering 532 to 541 (KQPESSKDTS) has biased composition (basic and acidic residues). A compositionally biased stretch (polar residues) spans 558-571 (ASVTAANCPNTTTP).

Belongs to the peptidase S39B family. Post-translationally, specific enzymatic cleavages in vivo yield mature proteins. The protease probably cleaves itself and releases the VPg protein.

The protein resides in the membrane. Functionally, precursor from which the VPg molecule is probably released at the onset of the RNA synthesis. Essential for virus replication. This chain is Protein P1, found in Turnip yellows virus (isolate FL-1) (TuYV).